A 692-amino-acid polypeptide reads, in one-letter code: MAREFSLKNTRNIGIMAHIDAGKTTTTERILYYTGRIHKIGETHEGASQMDWMEQEQERGITITSAATTAQWNGHRVNIIDTPGHVDFTVEVERSLRVLDGAVAVLDAQSGVEPQTETVWRQATTYGVPRVVFVNKMDKIGADFLYSVKTLHDRLQANAYAIQLPIGAEDDFKGIIDLVEMKTYMYNNDLGTDIEVTDGFPADMADQAEELRGQLIEGVADFNEELMMKYLEGEEISIDELKAAIRQATLSVEFYPVLVGSAFKNKGVQLMLNAVVDYLPSPVDVESIKGINLDTEEEITREPSDEAPFSALAFKVMTDPYVGKLTFFRVYSGTAEAGSYVKNSTKGKRERLGRILQMHANSREEIPMVFAGDIAAAVGFKDTTTGDTLCSEKDNIVLESMTFPEPVISVAIEPKSKADQDKMGQALAKLAEEDPTFRTETNPETGQTIISGMGELHLDILVDRMRREFKVEANVGAPQVAYRETIRGAAKIDSKFVRQSGGRGQYGHVVVEFEPNEEGAGFEFENKIVGGVVPREYVPAVQNGIEEALENGILAGYPVVDVKARLVFGSYHDVDSNEMAFKVAASMAVKQLKDQAKAVILEPMMRVEVVIPEEYMGDIMGDVTSRRGRVEGMEARGNAQVVKAMIPLSEMFGYATSLRSRTQGRGTYSMHFDHYEEVPKSIAEEIVKKANG.

The region spanning 8–283 (KNTRNIGIMA…AVVDYLPSPV (276 aa)) is the tr-type G domain. GTP is bound by residues 17-24 (AHIDAGKT), 81-85 (DTPGH), and 135-138 (NKMD).

Belongs to the TRAFAC class translation factor GTPase superfamily. Classic translation factor GTPase family. EF-G/EF-2 subfamily.

The protein localises to the cytoplasm. Its function is as follows. Catalyzes the GTP-dependent ribosomal translocation step during translation elongation. During this step, the ribosome changes from the pre-translocational (PRE) to the post-translocational (POST) state as the newly formed A-site-bound peptidyl-tRNA and P-site-bound deacylated tRNA move to the P and E sites, respectively. Catalyzes the coordinated movement of the two tRNA molecules, the mRNA and conformational changes in the ribosome. The sequence is that of Elongation factor G from Exiguobacterium sp. (strain ATCC BAA-1283 / AT1b).